A 965-amino-acid polypeptide reads, in one-letter code: Glycine dehydrogenase (decarboxylating) (965 aa).

Lysine 711 carries the post-translational modification N6-(pyridoxal phosphate)lysine.

This sequence belongs to the GcvP family. As to quaternary structure, the glycine cleavage system is composed of four proteins: P, T, L and H. Pyridoxal 5'-phosphate is required as a cofactor.

The catalysed reaction is N(6)-[(R)-lipoyl]-L-lysyl-[glycine-cleavage complex H protein] + glycine + H(+) = N(6)-[(R)-S(8)-aminomethyldihydrolipoyl]-L-lysyl-[glycine-cleavage complex H protein] + CO2. The glycine cleavage system catalyzes the degradation of glycine. The P protein binds the alpha-amino group of glycine through its pyridoxal phosphate cofactor; CO(2) is released and the remaining methylamine moiety is then transferred to the lipoamide cofactor of the H protein. This chain is Glycine dehydrogenase (decarboxylating), found in Psychrobacter cryohalolentis (strain ATCC BAA-1226 / DSM 17306 / VKM B-2378 / K5).